The sequence spans 236 residues: Small ribosomal subunit protein uS2c (236 aa).

The protein belongs to the universal ribosomal protein uS2 family.

The protein localises to the plastid. It localises to the chloroplast. This chain is Small ribosomal subunit protein uS2c (rps2), found in Nymphaea alba (White water-lily).